We begin with the raw amino-acid sequence, 340 residues long: Flap endonuclease 1 (340 aa).

The segment at 1 to 98 is N-domain; sequence MGVDLGGLVE…ETIKARAEVR (98 aa). Mg(2+) contacts are provided by Asp27, Asp80, Glu151, Glu153, Asp172, Asp174, and Asp235. Residues 115–256 are I-domain; sequence EAYKYAQAST…TALKLVKKHG (142 aa). The interval 332–340 is interaction with PCNA; it reads KQKTLSSWF.

This sequence belongs to the XPG/RAD2 endonuclease family. FEN1 subfamily. As to quaternary structure, interacts with PCNA. PCNA stimulates the nuclease activity without altering cleavage specificity. The cofactor is Mg(2+).

In terms of biological role, structure-specific nuclease with 5'-flap endonuclease and 5'-3' exonuclease activities involved in DNA replication and repair. During DNA replication, cleaves the 5'-overhanging flap structure that is generated by displacement synthesis when DNA polymerase encounters the 5'-end of a downstream Okazaki fragment. Binds the unpaired 3'-DNA end and kinks the DNA to facilitate 5' cleavage specificity. Cleaves one nucleotide into the double-stranded DNA from the junction in flap DNA, leaving a nick for ligation. Also involved in the base excision repair (BER) pathway. Acts as a genome stabilization factor that prevents flaps from equilibrating into structures that lead to duplications and deletions. Also possesses 5'-3' exonuclease activity on nicked or gapped double-stranded DNA. This chain is Flap endonuclease 1, found in Methanocella arvoryzae (strain DSM 22066 / NBRC 105507 / MRE50).